The following is a 181-amino-acid chain: 3-hydroxyanthranilate 3,4-dioxygenase (181 aa).

Arg-46 contacts O2. The Fe cation site is built by His-50, Glu-56, and His-95. Glu-56 provides a ligand contact to substrate. The substrate site is built by Arg-99 and Glu-109.

This sequence belongs to the 3-HAO family. Fe(2+) is required as a cofactor.

It localises to the cytoplasm. It catalyses the reaction 3-hydroxyanthranilate + O2 = (2Z,4Z)-2-amino-3-carboxymuconate 6-semialdehyde. The protein operates within cofactor biosynthesis; NAD(+) biosynthesis; quinolinate from L-kynurenine: step 3/3. In terms of biological role, catalyzes the oxidative ring opening of 3-hydroxyanthranilate to 2-amino-3-carboxymuconate semialdehyde, which spontaneously cyclizes to quinolinate. The sequence is that of 3-hydroxyanthranilate 3,4-dioxygenase from Mycosarcoma maydis (Corn smut fungus).